Reading from the N-terminus, the 281-residue chain is Transcription factor LBX1 (281 aa).

Over residues 1–20 (MTSKEDGKAAPGEERRRSPL) the composition is skewed to basic and acidic residues. A disordered region spans residues 1–35 (MTSKEDGKAAPGEERRRSPLDHLPPPANSNKPLTP). The homeobox DNA-binding region spans 125 to 184 (RRKSRTAFTNHQIYELEKRFLYQKYLSPADRDQIAQQLGLTNAQVITWFQNRRAKLKRDL). Positions 214-281 (NSEATAGGGG…EEDEEIDVDD (68 aa)) are disordered. Residues 253–267 (SPASPLTDQPASSQD) are compositionally biased toward polar residues. Positions 268–281 (CSEDEEDEEIDVDD) are enriched in acidic residues.

Interacts with SKOR1 which acts as a transcriptional corepressor.

The protein localises to the nucleus. Transcription factor required for the development of GABAergic interneurons in the dorsal horn of the spinal cord and migration and further development of hypaxial muscle precursor cells for limb muscles, diaphragm and hypoglossal cord. The sequence is that of Transcription factor LBX1 (LBX1) from Homo sapiens (Human).